A 166-amino-acid polypeptide reads, in one-letter code: uncharacterized protein (166 aa).

3 4Fe-4S ferredoxin-type domains span residues 3-33 (MKKI…GRIA), 37-67 (KDGK…EHKD), and 68-97 (GYVY…MEDK). Residues Cys13, Cys16, Cys19, Cys23, Cys46, Cys49, Cys54, Cys58, Cys77, Cys80, Cys83, Cys87, Cys101, Cys104, Cys111, and Cys115 each coordinate [4Fe-4S] cluster.

[4Fe-4S] cluster is required as a cofactor.

This is an uncharacterized protein from Methanocaldococcus jannaschii (strain ATCC 43067 / DSM 2661 / JAL-1 / JCM 10045 / NBRC 100440) (Methanococcus jannaschii).